A 43-amino-acid chain; its full sequence is Defensin-A (43 aa).

Intrachain disulfides connect cysteine 3-cysteine 34, cysteine 20-cysteine 39, and cysteine 24-cysteine 41.

The protein localises to the secreted. In terms of biological role, antibacterial protein. Strong activity against the Gram-positive bacteria M.luteus, B.megaterium and S.aureus. Reduced activity against Gram-positive bacterium B.subtilis and weak activity against Gram-negative bacterium X.japonicus. No detectable activity against the Gram-negative bacteria E.asbriae, E.coli, P.aeruginosa and S.marcescens. The chain is Defensin-A from Anomala cuprea (Cupreous chafer beetle).